The primary structure comprises 134 residues: Small ribosomal subunit protein bS6 (134 aa).

Positions 103-134 are disordered; the sequence is AAPVKSAEEGTEEVAAEAATEAPAETTTTVEG. The segment covering 118-134 has biased composition (low complexity); the sequence is AEAATEAPAETTTTVEG.

It belongs to the bacterial ribosomal protein bS6 family.

Binds together with bS18 to 16S ribosomal RNA. This Citrifermentans bemidjiense (strain ATCC BAA-1014 / DSM 16622 / JCM 12645 / Bem) (Geobacter bemidjiensis) protein is Small ribosomal subunit protein bS6.